The following is a 445-amino-acid chain: Tubulin beta chain (445 aa).

8 residues coordinate GTP: Q11, E69, S138, G142, T143, G144, N204, and N226. E69 contributes to the Mg(2+) binding site.

The protein belongs to the tubulin family. Dimer of alpha and beta chains. A typical microtubule is a hollow water-filled tube with an outer diameter of 25 nm and an inner diameter of 15 nM. Alpha-beta heterodimers associate head-to-tail to form protofilaments running lengthwise along the microtubule wall with the beta-tubulin subunit facing the microtubule plus end conferring a structural polarity. Microtubules usually have 13 protofilaments but different protofilament numbers can be found in some organisms and specialized cells. Mg(2+) is required as a cofactor.

The protein resides in the cytoplasm. It is found in the cytoskeleton. Tubulin is the major constituent of microtubules, a cylinder consisting of laterally associated linear protofilaments composed of alpha- and beta-tubulin heterodimers. Microtubules grow by the addition of GTP-tubulin dimers to the microtubule end, where a stabilizing cap forms. Below the cap, tubulin dimers are in GDP-bound state, owing to GTPase activity of alpha-tubulin. The polypeptide is Tubulin beta chain (Leishmania mexicana).